The primary structure comprises 235 residues: Large ribosomal subunit protein uL1 (235 aa).

This sequence belongs to the universal ribosomal protein uL1 family. Part of the 50S ribosomal subunit.

Binds directly to 23S rRNA. The L1 stalk is quite mobile in the ribosome, and is involved in E site tRNA release. Its function is as follows. Protein L1 is also a translational repressor protein, it controls the translation of the L11 operon by binding to its mRNA. The polypeptide is Large ribosomal subunit protein uL1 (Symbiobacterium thermophilum (strain DSM 24528 / JCM 14929 / IAM 14863 / T)).